The chain runs to 199 residues: ATP-dependent Clp protease proteolytic subunit (199 aa).

The active-site Nucleophile is serine 98. Residue histidine 123 is part of the active site.

Belongs to the peptidase S14 family. In terms of assembly, fourteen ClpP subunits assemble into 2 heptameric rings which stack back to back to give a disk-like structure with a central cavity, resembling the structure of eukaryotic proteasomes.

It localises to the cytoplasm. The catalysed reaction is Hydrolysis of proteins to small peptides in the presence of ATP and magnesium. alpha-casein is the usual test substrate. In the absence of ATP, only oligopeptides shorter than five residues are hydrolyzed (such as succinyl-Leu-Tyr-|-NHMec, and Leu-Tyr-Leu-|-Tyr-Trp, in which cleavage of the -Tyr-|-Leu- and -Tyr-|-Trp bonds also occurs).. Functionally, cleaves peptides in various proteins in a process that requires ATP hydrolysis. Has a chymotrypsin-like activity. Plays a major role in the degradation of misfolded proteins. This is ATP-dependent Clp protease proteolytic subunit from Ehrlichia chaffeensis (strain ATCC CRL-10679 / Arkansas).